Reading from the N-terminus, the 934-residue chain is Protocadherin gamma-C3 (934 aa).

Positions 1–31 (MVPEAWRSGLVSTGRVVGVLLLLGALNKAST) are cleaved as a signal peptide. 6 consecutive Cadherin domains span residues 32–135 (VIHY…NPAF), 136–244 (PTQE…APVF), 245–352 (NQSL…APEI), 353–457 (TVTS…PPQS), 458–567 (SQSS…APQV), and 572–685 (PGGS…APRE). Topologically, residues 32-693 (VIHYEIPEER…REQNKNLTFY (662 aa)) are extracellular. Residues N245, N424, N478, N550, N615, and N689 are each glycosylated (N-linked (GlcNAc...) asparagine). A helical membrane pass occupies residues 694–714 (LLLSLILVSVGFVVTVFGVII). The Cytoplasmic portion of the chain corresponds to 715 to 934 (FKVYKWKQSR…KKKSGKKEKK (220 aa)). Disordered stretches follow at residues 804 to 843 (ESAP…WPNN) and 904 to 934 (ATLT…KEKK). The segment covering 812–843 (APPNTDWRFSQAQRPGTSGSQNGDDTGTWPNN) has biased composition (polar residues). Residues 924 to 934 (NKKKSGKKEKK) are compositionally biased toward basic residues.

Its subcellular location is the cell membrane. In terms of biological role, potential calcium-dependent cell-adhesion protein. May be involved in the establishment and maintenance of specific neuronal connections in the brain. This is Protocadherin gamma-C3 (PCDHGC3) from Pan troglodytes (Chimpanzee).